Here is a 74-residue protein sequence, read N- to C-terminus: Omega-conotoxin-like protein 1 (74 aa).

The signal sequence occupies residues 1 to 20; that stretch reads MSKFILLVCILLLTTNIVSA. Intrachain disulfides connect Cys24/Cys38, Cys31/Cys43, and Cys37/Cys50.

Highly expressed in brain. Is also found in hemolymph.

Its function is as follows. The impact of this protein on the neuronal activity of the honeybee brain is not known. It does not affect apparent movement or hatching of blowfly larvae. However, when injected into fish, it induces a strong reversible paralytic effect. In addition, the presence of this small peptide in the hemolymph of adult drones together with its induction after bacterial infection suggests that this peptide exhibits antibacterial activity. This peptide may act by inhibiting ion channels. The sequence is that of Omega-conotoxin-like protein 1 from Apis mellifera (Honeybee).